The chain runs to 256 residues: MAVGKNKRLSKGKKGLKKRTVDPFSRKDEYSVKAPSTFQIRDVGKTLVNRTTGLKNANDSLKGRIFEVSLADLQNDEDHAFRKVKLRVDEVQGKNCLTNFHGLDFTSDKLRSLVRKWQSLIEANVTVKTTDDYLLRLFAIAFTKRRPNQIKKTTYARSSQIRAIRKKMTEIIQREAASCTLSQLTTKLIPEVIGREIEKSTQGIYPLQNVHIRKVKLLKSPKFDLGALLNLHGESTTDDQGHKVEREFKETVLESV.

A compositionally biased stretch (basic residues) spans 1 to 18 (MAVGKNKRLSKGKKGLKK). The tract at residues 1–20 (MAVGKNKRLSKGKKGLKKRT) is disordered. Ala-2 is modified (N-acetylalanine; partial).

The protein belongs to the eukaryotic ribosomal protein eS1 family. Component of the small ribosomal subunit. Mature ribosomes consist of a small (40S) and a large (60S) subunit. The 40S subunit contains about 33 different proteins and 1 molecule of RNA (18S). The 60S subunit contains about 49 different proteins and 3 molecules of RNA (25S, 5.8S and 5S).

The protein resides in the cytoplasm. The sequence is that of Small ribosomal subunit protein eS1 (rps1) from Talaromyces stipitatus (strain ATCC 10500 / CBS 375.48 / QM 6759 / NRRL 1006) (Penicillium stipitatum).